The sequence spans 89 residues: Cell division protein FtsL (89 aa).

Residues 1–6 (MAMNKL) lie on the Cytoplasmic side of the membrane. A helical transmembrane segment spans residues 7–24 (NFLLLLAVCVSAFSVVMQ). Topologically, residues 25–89 (QNQYRLNFTA…GNTFMVEHQR (65 aa)) are periplasmic. The stretch at 33–73 (TALDKAKKQEIALEQDYAQMRLQQARLANHEAIRAAAEKQN) forms a coiled coil.

It belongs to the FtsL family. As to quaternary structure, part of a complex composed of FtsB, FtsL and FtsQ.

Its subcellular location is the cell inner membrane. Essential cell division protein. May link together the upstream cell division proteins, which are predominantly cytoplasmic, with the downstream cell division proteins, which are predominantly periplasmic. The polypeptide is Cell division protein FtsL (Neisseria meningitidis serogroup B (strain ATCC BAA-335 / MC58)).